The sequence spans 152 residues: Transcriptional regulator MraZ (152 aa).

SpoVT-AbrB domains follow at residues 5–52 (ATMV…PLPE) and 81–124 (ASEC…DEQT).

Belongs to the MraZ family. Forms oligomers.

The protein localises to the cytoplasm. Its subcellular location is the nucleoid. Its function is as follows. Negatively regulates its own expression and that of the subsequent genes in the proximal part of the division and cell wall (dcw) gene cluster. Acts by binding directly to DNA. May also regulate the expression of genes outside the dcw cluster. This Yersinia pestis bv. Antiqua (strain Antiqua) protein is Transcriptional regulator MraZ.